A 207-amino-acid chain; its full sequence is Peptidyl-tRNA hydrolase (207 aa).

Residue Tyr-30 coordinates tRNA. His-35 serves as the catalytic Proton acceptor. TRNA contacts are provided by Tyr-81, Asn-83, and Asn-129.

Belongs to the PTH family. As to quaternary structure, monomer.

The protein resides in the cytoplasm. The catalysed reaction is an N-acyl-L-alpha-aminoacyl-tRNA + H2O = an N-acyl-L-amino acid + a tRNA + H(+). Hydrolyzes ribosome-free peptidyl-tRNAs (with 1 or more amino acids incorporated), which drop off the ribosome during protein synthesis, or as a result of ribosome stalling. In terms of biological role, catalyzes the release of premature peptidyl moieties from peptidyl-tRNA molecules trapped in stalled 50S ribosomal subunits, and thus maintains levels of free tRNAs and 50S ribosomes. This Bordetella avium (strain 197N) protein is Peptidyl-tRNA hydrolase.